Reading from the N-terminus, the 897-residue chain is MSGVSSNDCPHLECVGEITKEELIQKSHGQCQDCKVGGPNLWACLENGCSYVGCGESHADHSTVHSQETRHNLTVNLTTLRVWCYACTKEVFLERKLGPHKQLPNAAKAVSPVQTPCQDLNTPGSPTSLRVPSAGTCDDLDMETEEEDELRTRGLTGLKNIGNTCYMNAALQALSNCPPLTQFFLECGGLVKTDKKPALCKSYQKLITDLWHKNRNAYVVPTNLFQGIKAVNPMFRGYSQQDSQEFLRCLMDQLHEELKELIPEPEDPNQAVAMDDSPDEDNHSQSDDFQSCESCGSSDRADNEGPRVPEDINEAEMLMPEQNQNNRDWQKEKNLINNLYRAGSHGDLDKDVDTTSDSRPIISSQGAIKAQGRTSDSEIQVSSTVRPQSPTGNEGITSRLSSSPPKSSAWPNLSSTHKKVPMFTPTKTKRQRKYHSIISEVFDGTIVSSVQCLTCDRVSVTLENFQDISLPIPGKEDLAKLHSSSHQTALVKAGSCGEAYAPQGWIAFVMEYIKSWFWGPVVTLQDCLAAFFARDELKGDNMYSCEKCKKLRNGVKFCKVQSLPEILCIHLKRFRHELMFSTKIGTHVSFPLEGLEMQPFLAKDSSALTTTYDLLSVICHHGTASSGHYIAYCRNELNQLWYEFDDQSVTEVSESCVQNAEAYVLFYKKSNDETQKERRKVTSLFNMMEPSLLQFYVSRQWLNKFKTFAEPGPISNHDFLCAHGGIPPNKAAYIDDLVLMIPQNVWDHLYSRYGGGPAVNHLYVCHTCQNEIEKLEKRRKNELDMFVRLNKAFQEEESPVVIYCISMQWFREWESFVKGKDIDPPGPIDNSKIAVNKNGHITLKPGADSGQISEETWNFLHNIHGGGPVVTVRPSVSHQESETSQSEEKIEVETRTV.

A UBP-type zinc finger spans residues 7 to 110 (NDCPHLECVG…KQLPNAAKAV (104 aa)). Cys9, His11, Cys31, Cys34, Cys44, Cys49, Cys54, His61, His65, His71, Cys84, and Cys87 together coordinate Zn(2+). A USP domain is found at 156–670 (TGLKNIGNTC…EAYVLFYKKS (515 aa)). The active-site Nucleophile is Cys165. Disordered regions lie at residues 261 to 308 (LIPE…GPRV) and 343 to 420 (GSHG…HKKV). Residues 287-297 (DDFQSCESCGS) show a composition bias toward polar residues. 2 stretches are compositionally biased toward basic and acidic residues: residues 299 to 308 (DRADNEGPRV) and 344 to 353 (SHGDLDKDVD). Over residues 355-396 (TSDSRPIISSQGAIKAQGRTSDSEIQVSSTVRPQSPTGNEGI) the composition is skewed to polar residues. Positions 398 to 411 (SRLSSSPPKSSAWP) are enriched in low complexity. His628 serves as the catalytic Proton acceptor. DUSP domains follow at residues 672–765 (DETQ…LYVC) and 773–876 (EKLE…RPSV). Residues 875–884 (SVSHQESETS) show a composition bias toward low complexity. A disordered region spans residues 875–897 (SVSHQESETSQSEEKIEVETRTV). The segment covering 886-897 (SEEKIEVETRTV) has biased composition (basic and acidic residues).

The protein belongs to the peptidase C19 family. USP20/USP33 subfamily.

The protein localises to the cytoplasm. The protein resides in the perinuclear region. It localises to the cytoskeleton. Its subcellular location is the microtubule organizing center. It is found in the centrosome. The enzyme catalyses Thiol-dependent hydrolysis of ester, thioester, amide, peptide and isopeptide bonds formed by the C-terminal Gly of ubiquitin (a 76-residue protein attached to proteins as an intracellular targeting signal).. Its function is as follows. Deubiquitinating enzyme involved in various processes such as centrosome duplication, cellular migration and beta-2 adrenergic receptor/ADRB2 recycling. Involved in regulation of centrosome duplication by mediating deubiquitination of ccp110 in S and G2/M phase, leading to stabilize ccp110 during the period which centrioles duplicate and elongate. Involved in cell migration via its interaction with intracellular domain of robo1, leading to regulate the Slit signaling. Plays a role in commissural axon guidance cross the ventral midline of the neural tube in a Slit-dependent manner, possibly by mediating the deubiquitination of robo1. Acts as a regulator of G-protein coupled receptor (GPCR) signaling by mediating the deubiquitination of beta-arrestins (arrb1 and arrb2) and beta-2 adrenergic receptor (adrb2). Deubiquitinates dio2, thereby regulating thyroid hormone regulation. Mediates deubiquitination of both 'Lys-48'- and 'Lys-63'-linked polyubiquitin chains. The chain is Ubiquitin carboxyl-terminal hydrolase 33 (usp33) from Danio rerio (Zebrafish).